A 419-amino-acid chain; its full sequence is Thymidine phosphorylase (419 aa).

This sequence belongs to the thymidine/pyrimidine-nucleoside phosphorylase family. In terms of assembly, homodimer.

It carries out the reaction thymidine + phosphate = 2-deoxy-alpha-D-ribose 1-phosphate + thymine. The enzymes which catalyze the reversible phosphorolysis of pyrimidine nucleosides are involved in the degradation of these compounds and in their utilization as carbon and energy sources, or in the rescue of pyrimidine bases for nucleotide synthesis. This chain is Thymidine phosphorylase (deoA), found in Mycoplasmoides pirum (Mycoplasma pirum).